The sequence spans 167 residues: Small ribosomal subunit protein uS5 (167 aa).

Residues 11–74 (LQEKLIAVNR…DKARRNMTTI (64 aa)) enclose the S5 DRBM domain.

It belongs to the universal ribosomal protein uS5 family. As to quaternary structure, part of the 30S ribosomal subunit. Contacts proteins S4 and S8.

In terms of biological role, with S4 and S12 plays an important role in translational accuracy. Its function is as follows. Located at the back of the 30S subunit body where it stabilizes the conformation of the head with respect to the body. This Baumannia cicadellinicola subsp. Homalodisca coagulata protein is Small ribosomal subunit protein uS5.